A 219-amino-acid polypeptide reads, in one-letter code: Protein-L-isoaspartate O-methyltransferase (219 aa).

Serine 65 is a catalytic residue.

Belongs to the methyltransferase superfamily. L-isoaspartyl/D-aspartyl protein methyltransferase family. In terms of assembly, monomer.

It localises to the cytoplasm. The enzyme catalyses [protein]-L-isoaspartate + S-adenosyl-L-methionine = [protein]-L-isoaspartate alpha-methyl ester + S-adenosyl-L-homocysteine. In terms of biological role, catalyzes the methyl esterification of L-isoaspartyl residues in peptides and proteins that result from spontaneous decomposition of normal L-aspartyl and L-asparaginyl residues. It plays a role in the repair and/or degradation of damaged proteins. This Pyrococcus furiosus (strain ATCC 43587 / DSM 3638 / JCM 8422 / Vc1) protein is Protein-L-isoaspartate O-methyltransferase (pcm).